The sequence spans 582 residues: MEPSKLFTMSDNATFAPGPVINAADKKTFRTCFRILVLSVQAVTLILVIVTLGELVRMINDQGLSNQLSSIADKIRESATMIASAVGVMNQVIHGVTVSLPLQIEGNQNQLLSTLATICTGKKQVSNCSTNIPLVNDLRFINGINKFIIEDYATHDFSIGHPLNMPSFIPTATSPNGCTRIPSFSLGKTHWCYTHNVINANCKDHTSSNQYISMGILVQTASGYPMFKTLKIQYLSDGLNRKSCSIATVPDGCAMYCYVSTQLETDDYAGSSPPTQKLTLLFYNDTVTERTISPTGLEGNWATLVPGVGSGIYFENKLIFPAYGGVLPNSSLGVKSAREFFRPVNPYNPCSGPQQDLDQRALRSYFPSYFSNRRVQSAFLVCAWNQILVTNCELVVPSNNQTLMGAEGRVLLINNRLLYYQRSTSWWPYELLYEISFTFTNSGQSSVNMSWIPIYSFTRPGSGNCSGENVCPTACVSGVYLDPWPLTPYSHQSGINRNFYFTGALLNSSTTRVNPTLYVSALNNLKVLAPYGNQGLFASYTTTTCFQDTGDASVYCVYIMELASNIVGEFQILPVLTRLTIT.

Topologically, residues 1–34 are intravirion; it reads MEPSKLFTMSDNATFAPGPVINAADKKTFRTCFR. Residues 35–55 traverse the membrane as a helical; Signal-anchor for type II membrane protein segment; it reads ILVLSVQAVTLILVIVTLGEL. The Virion surface portion of the chain corresponds to 56–582; that stretch reads VRMINDQGLS…LPVLTRLTIT (527 aa). N-linked (GlcNAc...) asparagine; by host glycosylation occurs at asparagine 127. Intrachain disulfides connect cysteine 178-cysteine 202, cysteine 192-cysteine 253, and cysteine 244-cysteine 257. Positions 240 to 245 are involved in neuraminidase activity; the sequence is NRKSCS. Asparagine 284 and asparagine 329 each carry an N-linked (GlcNAc...) asparagine; by host glycan. 3 cysteine pairs are disulfide-bonded: cysteine 350–cysteine 471, cysteine 382–cysteine 392, and cysteine 465–cysteine 475. Residues asparagine 400, asparagine 448, and asparagine 464 are each glycosylated (N-linked (GlcNAc...) asparagine; by host). The N-linked (GlcNAc...) asparagine; by host glycan is linked to asparagine 507. A disulfide bridge connects residues cysteine 545 and cysteine 556.

Belongs to the paramyxoviruses hemagglutinin-neuraminidase family. As to quaternary structure, homotetramer; composed of disulfide-linked homodimers. Interacts with F protein trimer.

Its subcellular location is the virion membrane. It is found in the host cell membrane. The catalysed reaction is Hydrolysis of alpha-(2-&gt;3)-, alpha-(2-&gt;6)-, alpha-(2-&gt;8)- glycosidic linkages of terminal sialic acid residues in oligosaccharides, glycoproteins, glycolipids, colominic acid and synthetic substrates.. Attaches the virus to alpha-2,3-linked sialic acid-containing cell receptors and thereby initiating infection. Binding of HN protein to the receptor induces a conformational change that allows the F protein to trigger virion/cell membranes fusion. Binds to the glycan motifs sialyl Lewis (SLe) and GM2 ganglioside (GM2-glycan). Functionally, neuraminidase (sialidase) activity ensures the efficient spread of the virus by dissociating the mature virions from the neuraminic acid containing glycoproteins. The protein is Hemagglutinin-neuraminidase (HN) of Mumps virus genotype B (strain Miyahara vaccine) (MuV).